Consider the following 1064-residue polypeptide: Fibropellin-1 (1064 aa).

The signal sequence occupies residues 1 to 19 (MRTWLLAVLLLSVIAVTYG). The EGF-like 1 domain maps to 20–55 (QGECDSDPCENGSTCQEGEGSYICQCPMGYDGQNCD). Intrachain disulfides connect cysteine 23-cysteine 34, cysteine 28-cysteine 43, cysteine 45-cysteine 54, and cysteine 62-cysteine 88. N-linked (GlcNAc...) asparagine glycosylation occurs at asparagine 30. Residues 62–175 (CGYNVFDANG…NRGFRITFSS (114 aa)) enclose the CUB domain. The N-linked (GlcNAc...) asparagine glycan is linked to asparagine 136. The EGF-like 2; calcium-binding domain maps to 176–212 (DGDDCDPNLCQNGAACTDLVNDYACTCPPGFTGRNCE). Cystine bridges form between cysteine 180-cysteine 191, cysteine 185-cysteine 200, cysteine 202-cysteine 211, cysteine 218-cysteine 229, cysteine 223-cysteine 238, cysteine 240-cysteine 249, cysteine 256-cysteine 267, cysteine 261-cysteine 276, cysteine 278-cysteine 287, cysteine 294-cysteine 305, cysteine 299-cysteine 314, cysteine 316-cysteine 325, cysteine 332-cysteine 343, cysteine 337-cysteine 352, cysteine 354-cysteine 363, cysteine 370-cysteine 381, cysteine 375-cysteine 390, cysteine 392-cysteine 401, cysteine 408-cysteine 419, cysteine 413-cysteine 428, cysteine 430-cysteine 439, cysteine 446-cysteine 457, cysteine 451-cysteine 466, cysteine 468-cysteine 477, cysteine 484-cysteine 495, cysteine 489-cysteine 504, cysteine 506-cysteine 515, cysteine 522-cysteine 533, cysteine 527-cysteine 542, cysteine 544-cysteine 553, cysteine 560-cysteine 571, cysteine 565-cysteine 580, cysteine 582-cysteine 591, cysteine 598-cysteine 609, cysteine 603-cysteine 618, cysteine 620-cysteine 629, cysteine 636-cysteine 647, cysteine 641-cysteine 656, cysteine 658-cysteine 667, cysteine 674-cysteine 685, cysteine 679-cysteine 694, cysteine 696-cysteine 705, cysteine 712-cysteine 723, cysteine 717-cysteine 732, cysteine 734-cysteine 743, cysteine 750-cysteine 761, cysteine 755-cysteine 770, cysteine 772-cysteine 781, cysteine 788-cysteine 799, cysteine 793-cysteine 808, cysteine 810-cysteine 819, cysteine 826-cysteine 837, cysteine 831-cysteine 846, cysteine 848-cysteine 857, cysteine 864-cysteine 875, cysteine 869-cysteine 884, cysteine 886-cysteine 895, cysteine 902-cysteine 913, cysteine 907-cysteine 922, cysteine 924-cysteine 933, and cysteine 939-cysteine 1015. In terms of domain architecture, EGF-like 3; calcium-binding spans 214–250 (DIDECASDPCQNGGACVDGVNGYVCNCVPGFDGDECE). In terms of domain architecture, EGF-like 4; calcium-binding spans 252 to 288 (NINECASSPCLNGGICVDGVNMFECTCLAGFTGVRCE). Residues 290–326 (NIDECASAPCQNGGICIDGINGYTCSCPLGFSGDNCE) form the EGF-like 5; calcium-binding domain. The region spanning 328-364 (NDDECSSIPCLNGGTCVDLVNAYMCVCAPGWTGPTCA) is the EGF-like 6; calcium-binding domain. The EGF-like 7; calcium-binding domain occupies 366–402 (NIDECASAPCQNGGVCIDGVNGYMCDCQPGYTGTHCE). One can recognise an EGF-like 8; calcium-binding domain in the interval 404 to 440 (DIDECARPPCQNGGDCVDGVNGYVCICAPGFDGLNCE). The EGF-like 9; calcium-binding domain maps to 442–478 (NIDECASRPCQNGAVCVDGVNGFVCTCSAGYTGVLCE). The EGF-like 10; calcium-binding domain maps to 480-516 (DINECASMPCLNGGVCTDLVNGYICTCAAGFEGTNCE). An EGF-like 11; calcium-binding domain is found at 518–554 (DTDECASFPCQNGATCTDQVNGYVCTCVPGYTGVLCE). The EGF-like 12; calcium-binding domain occupies 556–592 (DINECASFPCLNGGTCNDQVNGYVCVCAQDTSVSTCE). The EGF-like 13; calcium-binding domain occupies 594–630 (DRDECASAPCLNGGACMDVVNGFVCTCLPGWEGTNCE). The region spanning 632 to 668 (NTDECASSPCMNGGLCVDQVNSYVCFCLPGFTGIHCG) is the EGF-like 14; calcium-binding domain. The EGF-like 15; calcium-binding domain occupies 670 to 706 (EIDECASSPCLNGGQCIDRVDSYECVCAAGYTAVRCQ). The EGF-like 16; calcium-binding domain occupies 708–744 (NIDECASAPCQNGGVCVDGVNGYVCNCAPGYTGDNCE). Residues 746-782 (EIDECASMPCLNGGACIEMVNGYTCQCVAGYTGVICE) form the EGF-like 17; calcium-binding domain. Positions 784 to 820 (DIDECASAPCQNGGVCTDTINGYICACVPGFTGSNCE) constitute an EGF-like 18; calcium-binding domain. In terms of domain architecture, EGF-like 19; calcium-binding spans 822-858 (NIDECASDPCLNGGICVDGVNGFVCQCPPNYSGTYCE). Asparagine 851 is a glycosylation site (N-linked (GlcNAc...) asparagine). Positions 860-896 (SLDACRSMPCQNGATCVNVGADYVCECVPGYAGQNCE) constitute an EGF-like 20 domain. Positions 898 to 934 (DINECASLPCQNGGLCIDGIAGYTCQCRLGYIGVNCE) constitute an EGF-like 21; calcium-binding domain. The Avidin-like domain occupies 937-1056 (GFCDLEGMWY…GQDKWTRYEQ (120 aa)).

As to quaternary structure, homotetramer.

It is found in the secreted. The protein resides in the extracellular space. Its subcellular location is the cytoplasmic vesicle. The protein localises to the extracellular matrix. It localises to the hyaline layer. It is found in the apical lamina. Forms the apical lamina, a component of the extracellular matrix. In Strongylocentrotus purpuratus (Purple sea urchin), this protein is Fibropellin-1 (EGF1).